A 593-amino-acid chain; its full sequence is Probable metalloprotease ARX1 (593 aa).

This sequence belongs to the peptidase M24 family. In terms of assembly, component of the nucleoplasmic and cytoplasmic pre-60S ribosomal particles. Interacts directly with REI1.

The protein localises to the cytoplasm. It localises to the nucleus. Probable metalloprotease involved in proper assembly of pre-ribosomal particles during the biogenesis of the 60S ribosomal subunit. Accompanies the pre-60S particles to the cytoplasm. The sequence is that of Probable metalloprotease ARX1 (ARX1) from Saccharomyces cerevisiae (strain ATCC 204508 / S288c) (Baker's yeast).